The primary structure comprises 208 residues: Ras-related protein Rab6 (208 aa).

19–27 provides a ligand contact to GTP; that stretch reads GEQSVGKTS. Positions 41–49 match the Effector region motif; it reads YQATIGIDF. Residues 67 to 71, 125 to 128, and 155 to 157 each bind GTP; these read DTAGQ, NKTD, and SAK. The disordered stretch occupies residues 176 to 208; that stretch reads MDSTENKPSEDMQEVVLKDSPNETKDPEGGCAC. Basic and acidic residues predominate over residues 179–208; it reads TENKPSEDMQEVVLKDSPNETKDPEGGCAC.

This sequence belongs to the small GTPase superfamily. Rab family. As to quaternary structure, interacts with Rich and Act5C. Interacts with BicD (via C-terminal domain). Interacts (in GTP-bound) with GCC1/CG10703 and cbs. Interacts with Gorab (via C-terminus); binds to a Gorab homodimer, this interaction seems to be required for trans-Golgi localization of Gorab. Expressed in larval eye, wing and leg imaginal disks and in salivary gland. Expressed in the larval optic lobe, showing an enrichment in the neuropil. In the adult brain, expressed in photoreceptors and mushroom body.

It is found in the golgi apparatus membrane. Its subcellular location is the synapse. The protein resides in the perikaryon. Functionally, protein transport. Regulator of membrane traffic from the Golgi apparatus towards the endoplasmic reticulum (ER). Mediates membrane trafficking during egg chamber growth and organization, possibly upstream of exocyst component Sec5. Also during oogenesis, plays a role, together with BicD but independently of Sec5, in the polarization of the oocyte microtubule cytoskeleton, in the localization of oskar mRNA and in the anterodorsal secretion of grk. Required for anterograde opsin transport through the ER-Golgi complex. Plays a role, together with Rich, in regulating CadN transport in photoreceptor cells which is required for the formation of normal synaptic connections between axons from the inner photoreceptor cells in the eye and postsynaptic cells in the brain medulla layer M6. Necessary for proper development of bristle shafts of macrochaete and microchaete on the head, thorax and scutellum. Modulates Notch signaling. As a key regulator of vesicular traffic, plays a critical role in the regulation of actin organization and is required for normal rates of phagocytic uptake during phagocytosis involved in defense against viral and fungal infection. In Drosophila melanogaster (Fruit fly), this protein is Ras-related protein Rab6.